Here is a 277-residue protein sequence, read N- to C-terminus: Coiled-coil domain-containing protein 117 (277 aa).

The tract at residues 22–69 is disordered; that stretch reads SPPAFAGRAFPPGAAGHDLAPRPGVRGPPSSPDGRTARGRVSIHCRKK. Residues 23-55 show a composition bias toward low complexity; the sequence is PPAFAGRAFPPGAAGHDLAPRPGVRGPPSSPDG. Residue Arg-47 is modified to Omega-N-methylarginine. Ser-52 is modified (phosphoserine). The segment covering 58–69 has biased composition (basic residues); that stretch reads ARGRVSIHCRKK. A coiled-coil region spans residues 139–166; the sequence is QCEVARRRLQEIEDRIIDEDEEVESDRN. Disordered stretches follow at residues 216–242 and 255–277; these read LSEKPKPSSNPKNYMGESQTKHTATGT and QCTDTPLYHSLETAASTEEEMEL. Residues 225–242 are compositionally biased toward polar residues; that stretch reads NPKNYMGESQTKHTATGT.

In terms of assembly, interacts with CIAO2B; the interaction is direct. Interacts with MMS19; the interaction is indirect.

It localises to the cytoplasm. Its subcellular location is the cytoskeleton. It is found in the spindle. The protein localises to the nucleus. In terms of biological role, facilitates DNA repair, cell cycle progression, and cell proliferation through its interaction with CIAO2B. The sequence is that of Coiled-coil domain-containing protein 117 from Rattus norvegicus (Rat).